The chain runs to 470 residues: Sorting nexin-17 (470 aa).

The 109-residue stretch at 1-109 folds into the PX domain; that stretch reads MHFSIPETES…SFLRRAQQET (109 aa). A 1,2-diacyl-sn-glycero-3-phospho-(1D-myo-inositol-3-phosphate) is bound by residues Arg-36, Ser-38, Lys-62, and Arg-75. The region spanning 115 to 206 is the Ras-associating domain; that stretch reads EEVSLEVLLS…YKIVLRKSYW (92 aa). Residues 115-432 are FERM-like; it reads EEVSLEVLLS…DATRESMVKL (318 aa). The interval 270 to 432 is PTB-like F3 module; sequence GYLRFDACVA…DATRESMVKL (163 aa). Phosphoserine occurs at positions 336, 407, 409, 415, 421, 437, and 440. Residues 401 to 426 are disordered; it reads GGTLRRSDSQQAVKSPPLLESPDATR. An interacts with the retriever complex region spans residues 458–470; that stretch reads GNFAFEGIGDEDL.

This sequence belongs to the sorting nexin family. In terms of assembly, monomer. Interacts with APP (via cytoplasmic YXNPXY motif). Interacts with KIF1B. Interacts with the C-termini of P-selectin, PTC, LDLR, VLDLR, LRP1 and LRP8. Interacts with KRIT1 (via N-terminus). Interacts with HRAS. Interacts with ITGB1 and ITGB5 (via NPxY motif). Interacts with CCDC22 and CCDC93; the interaction associates SNX17 with the CCC complex. Interacts (via C-terminus) with VPS26C and VPS35L; the interactions are direct and associate SNX17 with the retriever complex.

The protein resides in the cytoplasm. It localises to the early endosome. Its subcellular location is the cytoplasmic vesicle membrane. Its function is as follows. Critical regulator of endosomal recycling of numerous surface proteins, including integrins, signaling receptor and channels. Binds to NPxY sequences in the cytoplasmic tails of target cargos. Associates with retriever and CCC complexes to prevent lysosomal degradation and promote cell surface recycling of numerous cargos such as integrins ITGB1, ITGB5 and their associated alpha subunits. Also required for maintenance of normal cell surface levels of APP and LRP1. Interacts with membranes containing phosphatidylinositol 3-phosphate (PtdIns(3P)). The protein is Sorting nexin-17 (SNX17) of Homo sapiens (Human).